The following is a 924-amino-acid chain: DNA repair and recombination protein RDH54 (924 aa).

Over residues 1–10 (MQIPKYENKP) the composition is skewed to basic and acidic residues. Disordered stretches follow at residues 1–21 (MQIPKYENKPFKPPRRVGSNK) and 155–183 (EALSQNMGNPNPPTTSTTETVPSTKNDGG). A compositionally biased stretch (low complexity) spans 168–178 (TTSTTETVPST). One can recognise a Helicase ATP-binding domain in the interval 299–487 (LENDSDISGC…FTIIDFINPG (189 aa)). 346-353 (IPLTGLCK) is an ATP binding site. Residues 472 to 475 (NDLN) carry the DEGH box motif. Residue Lys615 forms a Glycyl lysine isopeptide (Lys-Gly) (interchain with G-Cter in ubiquitin) linkage. One can recognise a Helicase C-terminal domain in the interval 631 to 790 (KLRVLMTLLE…DSEMRNKESS (160 aa)).

The protein belongs to the SNF2/RAD54 helicase family. As to quaternary structure, interacts with RAD51 and DMC1.

It is found in the nucleus. It carries out the reaction ATP + H2O = ADP + phosphate + H(+). In terms of biological role, involved in the recombinational repair of double-strand breaks (DSB) in DNA during mitosis and meiosis. Has DNA dependent ATPase activity. Promotes D-loop (displacement loop) formation with RAD51 recombinase. Modifies the topology of double-stranded DNA during the D-loop reaction to facilitate the invasion of the homologous duplex molecule by the initiating single-stranded DNA substrate. Required for adaptation from G2/M checkpoint arrest induced by a double strand break, by participating in monitoring the extent of single-stranded DNA produced by resection of DNA ends. This role is distinct from its roles in recombination. Promotes colocalization of RAD51 and DMC1 during meiotic recombination. Involved in crossover interference. This is DNA repair and recombination protein RDH54 (RDH54) from Saccharomyces cerevisiae (strain RM11-1a) (Baker's yeast).